The following is a 258-amino-acid chain: Type III pantothenate kinase (258 aa).

6–13 (DVGNTNTV) provides a ligand contact to ATP. Substrate-binding positions include Tyr-100 and 107 to 110 (GADR). Asp-109 (proton acceptor) is an active-site residue. Position 129 (Asp-129) interacts with K(+). Position 132 (Thr-132) interacts with ATP. Thr-184 lines the substrate pocket.

Belongs to the type III pantothenate kinase family. Homodimer. It depends on NH4(+) as a cofactor. K(+) is required as a cofactor.

The protein resides in the cytoplasm. It catalyses the reaction (R)-pantothenate + ATP = (R)-4'-phosphopantothenate + ADP + H(+). It functions in the pathway cofactor biosynthesis; coenzyme A biosynthesis; CoA from (R)-pantothenate: step 1/5. Its function is as follows. Catalyzes the phosphorylation of pantothenate (Pan), the first step in CoA biosynthesis. This Geobacillus kaustophilus (strain HTA426) protein is Type III pantothenate kinase.